Consider the following 232-residue polypeptide: Sugar fermentation stimulation protein homolog (232 aa).

It belongs to the SfsA family.

The sequence is that of Sugar fermentation stimulation protein homolog from Alkaliphilus metalliredigens (strain QYMF).